Here is a 425-residue protein sequence, read N- to C-terminus: (S)-6-hydroxynicotine oxidase (425 aa).

FAD is bound by residues Ser12, Glu31, 38–39 (GR), and 56–59 (GGAY). Asn166 is a binding site for (S)-6-hydroxynicotine. Val226 serves as a coordination point for FAD. Residues Tyr311, Phe326, and Trp371 each contribute to the (S)-6-hydroxynicotine site. FAD is bound by residues Ser398 and 406-408 (GYI). (S)-6-hydroxynicotine is bound at residue Tyr407.

The protein belongs to the flavin monoamine oxidase family. As to quaternary structure, homodimer. It depends on FAD as a cofactor.

The protein localises to the cytoplasm. The catalysed reaction is (S)-6-hydroxynicotine + O2 + H2O = 6-hydroxypseudooxynicotine + H2O2. The enzyme catalyses (S)-6-hydroxynicotine + O2 = 6-hydroxy-N-methylmyosmine + H2O2. It functions in the pathway alkaloid degradation; nicotine degradation; 6-hydroxypseudooxynicotine from nicotine (S-isomer route): step 2/2. With respect to regulation, inhibited by (R)-6-hydroxynicotine. Inhibited by high concentrations of phenanthroline. Activity is strongly affected by Hg(2+) and p-chloromercuriphenylsulfonate, but not by N-ethylmaleimide and 5,5'-dithiobis-(2-nitrobenzoate). In terms of biological role, involved in the degradation of L-nicotine. Catalyzes the oxidation of (S)-6-hydroxynicotine (6-hydroxy-L-nicotine) to 6-hydroxypseudooxynicotine. Oxidation of the pyrrolidine ring of (S)-6-hydroxynicotine leads to the formation of the optically inactive 6-hydroxy-N-methylmyosmine, which hydrolyzes spontaneously to 6-hydroxypseudooxynicotine. Acts with absolute stereospecificity on the L-form of 6-hydroxynicotine. Can also use (S)-6-hydroxynornicotine. This is (S)-6-hydroxynicotine oxidase from Paenarthrobacter nicotinovorans (Arthrobacter nicotinovorans).